A 141-amino-acid chain; its full sequence is Sperm protein associated with the nucleus on the X chromosome N3 (141 aa).

A compositionally biased stretch (polar residues) spans 1–10 (MEQPTSSTNG). Disordered stretches follow at residues 1 to 47 (MEQP…TKTS) and 66 to 141 (NQLE…SGED). The segment covering 11-26 (EKTKSPCESNNKKNDE) has biased composition (basic and acidic residues). Over residues 66-80 (NQLENEQSQENSINP) the composition is skewed to polar residues. The segment covering 84–103 (EEDEGVDLSEGSSNEDEDLG) has biased composition (acidic residues). Positions 132–141 (EGSSQDSGED) are enriched in polar residues.

This sequence belongs to the SPAN-X family.

This Homo sapiens (Human) protein is Sperm protein associated with the nucleus on the X chromosome N3 (SPANXN3).